Reading from the N-terminus, the 42-residue chain is Iota-conotoxin-like R11.15 (42 aa).

4 disulfides stabilise this stretch: Cys-5–Cys-19, Cys-12–Cys-22, Cys-18–Cys-27, and Cys-21–Cys-36.

Belongs to the conotoxin I1 superfamily. In terms of tissue distribution, expressed by the venom duct.

The protein localises to the secreted. In terms of biological role, iota-conotoxins bind to voltage-gated sodium channels (Nav) and act as agonists by shifting the voltage-dependence of activation to more hyperpolarized levels. Produces general excitatory symptoms. The sequence is that of Iota-conotoxin-like R11.15 from Conus radiatus (Rayed cone).